A 222-amino-acid chain; its full sequence is CASP-like protein 1E1 (222 aa).

Over 1 to 59 (MEASRVKPGFNGVGMAAGSVNGSSRRPGPGLGYGYGYYMGSGAAAGGSGRAAQAPVDGC) the chain is Cytoplasmic. A helical membrane pass occupies residues 60 to 80 (SVALRVFVVASTLVSAVVMGV). At 81–110 (DRQTRTIQITITDALPPLEVPLTANWSYSS) the chain is on the extracellular side. An N-linked (GlcNAc...) asparagine glycan is attached at N105. The helical transmembrane segment at 111 to 131 (AFVYFVVANAMVCLFSAAALA) threads the bilayer. The Cytoplasmic segment spans residues 132–146 (ACRSRAAMVPVMVGD). Residues 147 to 167 (LLALALLYSAVGAAAEFGILG) form a helical membrane-spanning segment. Topologically, residues 168-189 (ERGNSHVRWAKVCNVYGRFCDR) are extracellular. A helical transmembrane segment spans residues 190–210 (AMAAVIVSLIGAFANLVLLML). Residues 211–222 (NILTIHKSSSYY) are Cytoplasmic-facing.

It belongs to the Casparian strip membrane proteins (CASP) family. Homodimer and heterodimers.

The protein resides in the cell membrane. This chain is CASP-like protein 1E1, found in Sorghum bicolor (Sorghum).